The primary structure comprises 71 residues: Antitoxin ParD2 (71 aa).

Functionally, antitoxin component of a type II toxin-antitoxin (TA) system. The polypeptide is Antitoxin ParD2 (parD2) (Mycobacterium tuberculosis (strain CDC 1551 / Oshkosh)).